Here is a 347-residue protein sequence, read N- to C-terminus: Druantia protein DruD (347 aa).

Its subcellular location is the cytoplasm. In terms of biological role, component of antiviral defense system Druantia type I, composed of DruA, DruB, DruC, DruD and DruE. Expression of Druantia in E.coli (strain MG1655) confers resistance to phage lambda, SECphi18, SECphi27 and T4. The polypeptide is Druantia protein DruD (Escherichia coli (strain UMEA 4076-1)).